The following is an 879-amino-acid chain: Alanine--tRNA ligase (879 aa).

Zn(2+) is bound by residues His-566, His-570, Cys-668, and His-672.

It belongs to the class-II aminoacyl-tRNA synthetase family. Zn(2+) serves as cofactor.

The protein localises to the cytoplasm. It catalyses the reaction tRNA(Ala) + L-alanine + ATP = L-alanyl-tRNA(Ala) + AMP + diphosphate. Catalyzes the attachment of alanine to tRNA(Ala) in a two-step reaction: alanine is first activated by ATP to form Ala-AMP and then transferred to the acceptor end of tRNA(Ala). Also edits incorrectly charged Ser-tRNA(Ala) and Gly-tRNA(Ala) via its editing domain. This chain is Alanine--tRNA ligase, found in Clostridium perfringens (strain ATCC 13124 / DSM 756 / JCM 1290 / NCIMB 6125 / NCTC 8237 / Type A).